We begin with the raw amino-acid sequence, 334 residues long: Ferredoxin--NADP reductase (334 aa).

FAD contacts are provided by Asp-33, Gln-41, Tyr-46, Ala-86, Phe-120, Asp-286, and Thr-327.

It belongs to the ferredoxin--NADP reductase type 2 family. In terms of assembly, homodimer. Requires FAD as cofactor.

The catalysed reaction is 2 reduced [2Fe-2S]-[ferredoxin] + NADP(+) + H(+) = 2 oxidized [2Fe-2S]-[ferredoxin] + NADPH. This Rickettsia typhi (strain ATCC VR-144 / Wilmington) protein is Ferredoxin--NADP reductase.